A 72-amino-acid chain; its full sequence is DNA-directed RNA polymerase subunit epsilon (72 aa).

Belongs to the RNA polymerase subunit epsilon family. In terms of assembly, RNAP is composed of a core of 2 alpha, a beta and a beta' subunit. The core is associated with a delta subunit, and at least one of epsilon or omega. When a sigma factor is associated with the core the holoenzyme is formed, which can initiate transcription.

It carries out the reaction RNA(n) + a ribonucleoside 5'-triphosphate = RNA(n+1) + diphosphate. Its function is as follows. A non-essential component of RNA polymerase (RNAP). The protein is DNA-directed RNA polymerase subunit epsilon of Staphylococcus aureus (strain JH1).